Consider the following 567-residue polypeptide: uncharacterized protein (567 aa).

Residues 1-26 (MPSEKATTRHLPGAVETLSPRTGRRP) form a disordered region. Transmembrane regions (helical) follow at residues 57–77 (AILVTNVIGLIVGAMLLTVAF), 90–110 (VSFGIVPGYCVLAFILGTYWL), 142–162 (VALAVLFLWGAAAALWTIIYG), 173–193 (LFSMGVIGVVAATSCYLLTEF), 221–241 (MLVWLLCSGVPNVGVALTAIF), and 257–277 (VLILWAPLLIFGFILMWILAW). Positions 278–329 (LTATPVRVVREALNRVEQGDLSGDLVVFDGTELGELQRGFNRMVEGLRERER) constitute an HAMP domain. The 125-residue stretch at 361-485 (AVVFVDIVGS…EPVNEAARLC (125 aa)) folds into the Guanylate cyclase domain.

Belongs to the adenylyl cyclase class-3 family.

It localises to the cell membrane. This is an uncharacterized protein from Mycobacterium tuberculosis (strain ATCC 25618 / H37Rv).